A 389-amino-acid chain; its full sequence is MVSVSEIRKAQRAEGPATILAIGTANPANCVEQSTYPDFYFRITNSEHKTELKQKFQRMCDKSMINRRYMYLTEEILKENPSVCEYMAPSLDARQDMVVVEVPRLGKEAAVKAIKEWGQPKSKITHLIFCTTSGVDMPGADYQLTKLLGLRPYVKRYMMYQQGCFAGGTVLRLAKDLAENNKGARVLVVCSEVTAVTFRGPSDTHLDSLVGQALFGDGAAALIVGSDPLPEIENPIFEMVWTAQTIAPDSEGAIDGHLREAGLTFHLLKDVPAIVSKNIDKALVEAFQPLGISDYNSIFWIAHPGGPAILDQVEQKLALKPEKMKATREVLSEYGNMSSACVLFILDEMRRKSIQNGLKTTGEGLEWGVLFGFGPGLTIETVVLHSVAI.

Residue cysteine 164 is part of the active site.

It belongs to the thiolase-like superfamily. Chalcone/stilbene synthases family.

It catalyses the reaction (E)-4-coumaroyl-CoA + 3 malonyl-CoA + 3 H(+) = 2',4,4',6'-tetrahydroxychalcone + 3 CO2 + 4 CoA. Its pathway is secondary metabolite biosynthesis; flavonoid biosynthesis. Functionally, the primary product of this enzyme is 4,2',4',6'-tetrahydroxychalcone (also termed naringenin-chalcone or chalcone) which can under specific conditions spontaneously isomerize into naringenin. The chain is Chalcone synthase 3 (CHS3) from Pisum sativum (Garden pea).